The chain runs to 402 residues: Dihydrolipoyllysine-residue acetyltransferase component of pyruvate dehydrogenase complex (402 aa).

Residues 2–77 (ANEFKFTDVG…HIGQVMAVID (76 aa)) form the Lipoyl-binding domain. Lys43 carries the N6-lipoyllysine modification. 2 disordered regions span residues 82–110 (AAAPAAPQPVSAPAPAPTPTFTPTPAPVT) and 143–172 (PQPTPAPVVQPTSAPTPTPAPASAAAPSGE). Pro residues-rich tracts occupy residues 87–107 (APQPVSAPAPAPTPTFTPTPA) and 143–162 (PQPTPAPVVQPTSAPTPTPA). His374 is an active-site residue.

It belongs to the 2-oxoacid dehydrogenase family. In terms of assembly, forms a 24-polypeptide structural core with octahedral symmetry. The cofactor is (R)-lipoate.

The catalysed reaction is N(6)-[(R)-dihydrolipoyl]-L-lysyl-[protein] + acetyl-CoA = N(6)-[(R)-S(8)-acetyldihydrolipoyl]-L-lysyl-[protein] + CoA. Functionally, the pyruvate dehydrogenase complex catalyzes the overall conversion of pyruvate to acetyl-CoA and CO(2). It contains multiple copies of three enzymatic components: pyruvate dehydrogenase (E1), dihydrolipoamide acetyltransferase (E2) and lipoamide dehydrogenase (E3). The polypeptide is Dihydrolipoyllysine-residue acetyltransferase component of pyruvate dehydrogenase complex (pdhC) (Mycoplasma pneumoniae (strain ATCC 29342 / M129 / Subtype 1) (Mycoplasmoides pneumoniae)).